The following is a 195-amino-acid chain: Imidazoleglycerol-phosphate dehydratase (195 aa).

This sequence belongs to the imidazoleglycerol-phosphate dehydratase family.

The protein localises to the cytoplasm. The enzyme catalyses D-erythro-1-(imidazol-4-yl)glycerol 3-phosphate = 3-(imidazol-4-yl)-2-oxopropyl phosphate + H2O. It participates in amino-acid biosynthesis; L-histidine biosynthesis; L-histidine from 5-phospho-alpha-D-ribose 1-diphosphate: step 6/9. This chain is Imidazoleglycerol-phosphate dehydratase, found in Cupriavidus taiwanensis (strain DSM 17343 / BCRC 17206 / CCUG 44338 / CIP 107171 / LMG 19424 / R1) (Ralstonia taiwanensis (strain LMG 19424)).